Reading from the N-terminus, the 408-residue chain is 3-ketoacyl-CoA thiolase A, peroxisomal (408 aa).

Cys-112 (acyl-thioester intermediate) is an active-site residue. Active-site proton acceptor residues include His-366 and Cys-394.

It belongs to the thiolase-like superfamily. Thiolase family. Homodimer.

The protein resides in the peroxisome. The catalysed reaction is an acyl-CoA + acetyl-CoA = a 3-oxoacyl-CoA + CoA. It functions in the pathway lipid metabolism; fatty acid metabolism. In Candida tropicalis (Yeast), this protein is 3-ketoacyl-CoA thiolase A, peroxisomal.